Reading from the N-terminus, the 379-residue chain is ORC1-type DNA replication protein 2 (379 aa).

ATP-binding positions include 69–73, tyrosine 211, and arginine 223; that span reads TGKTT.

This sequence belongs to the CDC6/cdc18 family. In terms of assembly, interacts with MCM. In terms of processing, autophosphorylated on a serine. Phosphorylation is inhibited by binding to MCM. Both single-stranded DNA and double-stranded DNA inhibit the phosphorylation reaction.

Involved in regulation of DNA replication. Dissociates the MCM complex and inhibits the MCM helicase activity, suggesting that it may function as a helicase loader. Binds to both specific and random double-stranded or single-stranded DNA. The sequence is that of ORC1-type DNA replication protein 2 (cdc6-2) from Methanothermobacter thermautotrophicus (strain ATCC 29096 / DSM 1053 / JCM 10044 / NBRC 100330 / Delta H) (Methanobacterium thermoautotrophicum).